Here is a 77-residue protein sequence, read N- to C-terminus: MDMRKLVGSNFARLRREKGLTQEEVEARSGFSQQYLSSLERGRRNPTVITLYELAQALGVSHVELVTPTDETPFGTR.

One can recognise an HTH cro/C1-type domain in the interval 11–65; that stretch reads FARLRREKGLTQEEVEARSGFSQQYLSSLERGRRNPTVITLYELAQALGVSHVEL. A DNA-binding region (H-T-H motif) is located at residues 22 to 41; sequence QEEVEARSGFSQQYLSSLER.

This is an uncharacterized protein from Sinorhizobium fredii (strain NBRC 101917 / NGR234).